A 177-amino-acid chain; its full sequence is ATP synthase subunit delta (177 aa).

The protein belongs to the ATPase delta chain family. As to quaternary structure, F-type ATPases have 2 components, F(1) - the catalytic core - and F(0) - the membrane proton channel. F(1) has five subunits: alpha(3), beta(3), gamma(1), delta(1), epsilon(1). F(0) has three main subunits: a(1), b(2) and c(10-14). The alpha and beta chains form an alternating ring which encloses part of the gamma chain. F(1) is attached to F(0) by a central stalk formed by the gamma and epsilon chains, while a peripheral stalk is formed by the delta and b chains.

Its subcellular location is the cell inner membrane. Functionally, f(1)F(0) ATP synthase produces ATP from ADP in the presence of a proton or sodium gradient. F-type ATPases consist of two structural domains, F(1) containing the extramembraneous catalytic core and F(0) containing the membrane proton channel, linked together by a central stalk and a peripheral stalk. During catalysis, ATP synthesis in the catalytic domain of F(1) is coupled via a rotary mechanism of the central stalk subunits to proton translocation. This protein is part of the stalk that links CF(0) to CF(1). It either transmits conformational changes from CF(0) to CF(1) or is implicated in proton conduction. This chain is ATP synthase subunit delta, found in Aliivibrio salmonicida (strain LFI1238) (Vibrio salmonicida (strain LFI1238)).